A 238-amino-acid chain; its full sequence is Ribose-5-phosphate isomerase A (238 aa).

Substrate contacts are provided by residues 30 to 33 (SGST), 87 to 90 (DGAD), and 100 to 103 (KGGG). The active-site Proton acceptor is the Glu109. Lys127 contributes to the substrate binding site.

Belongs to the ribose 5-phosphate isomerase family. Homodimer.

It catalyses the reaction aldehydo-D-ribose 5-phosphate = D-ribulose 5-phosphate. Its pathway is carbohydrate degradation; pentose phosphate pathway; D-ribose 5-phosphate from D-ribulose 5-phosphate (non-oxidative stage): step 1/1. Its function is as follows. Catalyzes the reversible conversion of ribose-5-phosphate to ribulose 5-phosphate. This is Ribose-5-phosphate isomerase A from Synechococcus sp. (strain WH7803).